Consider the following 454-residue polypeptide: Bifunctional protein GlmU (454 aa).

The interval 1–232 (MTDRTCLSIV…VDNVIGINNR (232 aa)) is pyrophosphorylase. UDP-N-acetyl-alpha-D-glucosamine contacts are provided by residues 11–14 (LAAG), K25, Q78, and 83–84 (GT). D108 is a Mg(2+) binding site. UDP-N-acetyl-alpha-D-glucosamine-binding residues include G144, E158, N173, and N230. N230 is a binding site for Mg(2+). The interval 233 to 253 (AELAEAETIWQNRKRRELMLS) is linker. The segment at 254–454 (GVTLIAPETV…AIKAAKSVSK (201 aa)) is N-acetyltransferase. R319 and K337 together coordinate UDP-N-acetyl-alpha-D-glucosamine. H349 serves as the catalytic Proton acceptor. Y352 and N363 together coordinate UDP-N-acetyl-alpha-D-glucosamine. Residues A366, 372 to 373 (NY), S391, S409, and R426 each bind acetyl-CoA.

The protein in the N-terminal section; belongs to the N-acetylglucosamine-1-phosphate uridyltransferase family. It in the C-terminal section; belongs to the transferase hexapeptide repeat family. Homotrimer. Requires Mg(2+) as cofactor.

The protein localises to the cytoplasm. It carries out the reaction alpha-D-glucosamine 1-phosphate + acetyl-CoA = N-acetyl-alpha-D-glucosamine 1-phosphate + CoA + H(+). The enzyme catalyses N-acetyl-alpha-D-glucosamine 1-phosphate + UTP + H(+) = UDP-N-acetyl-alpha-D-glucosamine + diphosphate. The protein operates within nucleotide-sugar biosynthesis; UDP-N-acetyl-alpha-D-glucosamine biosynthesis; N-acetyl-alpha-D-glucosamine 1-phosphate from alpha-D-glucosamine 6-phosphate (route II): step 2/2. Its pathway is nucleotide-sugar biosynthesis; UDP-N-acetyl-alpha-D-glucosamine biosynthesis; UDP-N-acetyl-alpha-D-glucosamine from N-acetyl-alpha-D-glucosamine 1-phosphate: step 1/1. It participates in bacterial outer membrane biogenesis; LPS lipid A biosynthesis. Functionally, catalyzes the last two sequential reactions in the de novo biosynthetic pathway for UDP-N-acetylglucosamine (UDP-GlcNAc). The C-terminal domain catalyzes the transfer of acetyl group from acetyl coenzyme A to glucosamine-1-phosphate (GlcN-1-P) to produce N-acetylglucosamine-1-phosphate (GlcNAc-1-P), which is converted into UDP-GlcNAc by the transfer of uridine 5-monophosphate (from uridine 5-triphosphate), a reaction catalyzed by the N-terminal domain. The polypeptide is Bifunctional protein GlmU (Brucella melitensis biotype 1 (strain ATCC 23456 / CCUG 17765 / NCTC 10094 / 16M)).